A 281-amino-acid chain; its full sequence is Elongation factor 1-delta (281 aa).

An N-acetylalanine modification is found at alanine 2. Lysine 17 is modified (N6-acetyllysine). A phosphoserine mark is found at serine 37, serine 44, serine 60, serine 86, and serine 106. A leucine-zipper region spans residues 80–115 (LIVRIASLEVENQNLRGVVQDLQQAISKLEVRLSTL). An N6-acetyllysine modification is found at lysine 107. The span at 115–132 (LEKSSPTHRATAPQTQHV) shows a compositional bias: polar residues. A disordered region spans residues 115 to 172 (LEKSSPTHRATAPQTQHVSPMRQVEPPAKKGATPAEDDEDNDIDLFGSDEEEEDKEAA). Lysine 117 is modified (N6-acetyllysine; alternate). Lysine 117 carries the N6-succinyllysine; alternate modification. Serine 119 carries the post-translational modification Phosphoserine. Phosphothreonine is present on threonine 129. Position 133 is a phosphoserine (serine 133). At threonine 147 the chain carries Phosphothreonine. A compositionally biased stretch (acidic residues) spans 149 to 169 (AEDDEDNDIDLFGSDEEEEDK). A Phosphoserine; by CK2 modification is found at serine 162. The catalytic (GEF) stretch occupies residues 173-281 (RLREERLRQY…SVDIAAFNKI (109 aa)).

This sequence belongs to the EF-1-beta/EF-1-delta family. As to quaternary structure, EF-1 is composed of 4 subunits: alpha, beta, delta isoform 1, and gamma. Isoform 2 interacts with HSF1 and NFE2L2.

It is found in the nucleus. Its function is as follows. EF-1-beta and EF-1-delta stimulate the exchange of GDP bound to EF-1-alpha to GTP, regenerating EF-1-alpha for another round of transfer of aminoacyl-tRNAs to the ribosome. Functionally, regulates induction of heat-shock-responsive genes through association with heat shock transcription factors and direct DNA-binding at heat shock promoter elements (HSE). This is Elongation factor 1-delta (Eef1d) from Rattus norvegicus (Rat).